The primary structure comprises 156 residues: Endogenous retrovirus group K member 19 Pro protein (156 aa).

Residues Phe21–Leu96 enclose the Peptidase A2 domain. Residue Asp26 is part of the active site. The 46-residue stretch at Tyr111–Phe156 folds into the G-patch domain.

It belongs to the peptidase A2 family. HERV class-II K(HML-2) subfamily. As to quaternary structure, active as a homodimer. In terms of processing, autoproteolytically processed at the N-terminus. Expected C-terminal autoprocessing not detected. The sequence shown is that of the processed Pro protein.

It carries out the reaction Processing at the authentic HIV-1 PR recognition site and release of the mature p17 matrix and the p24 capsid protein, as a result of the cleavage of the -SQNY-|-PIVQ- cleavage site.. Its function is as follows. Retroviral proteases have roles in the processing of the primary translation products and the maturation of the viral particle. Endogenous Pro proteins may have kept, lost or modified their original function during evolution. This is Endogenous retrovirus group K member 19 Pro protein (ERVK-19) from Homo sapiens (Human).